An 84-amino-acid chain; its full sequence is uncharacterized protein (84 aa).

This is an uncharacterized protein from Rickettsia prowazekii (strain Madrid E).